The chain runs to 482 residues: Aspartic proteinase 36 (482 aa).

An N-terminal signal peptide occupies residues 1-27 (MVTTMDPSRISRIVAVVFVLVIQVVSG). N-linked (GlcNAc...) asparagine glycosylation occurs at N32. In terms of domain architecture, Peptidase A1 spans 78 to 429 (YFTKIKLGSP…DLENEVIGWA (352 aa)). Residue D96 is part of the active site. Residues N178, N204, and N226 are each glycosylated (N-linked (GlcNAc...) asparagine). Residue D310 is part of the active site. A disulfide bond links C347 and C388. N432 is a glycosylation site (N-linked (GlcNAc...) asparagine). A lipid anchor (GPI-anchor amidated serine) is attached at S456. Residues 457-482 (AASSVMNGTLVTLLSILIWVFHSFTS) constitute a propeptide, removed in mature form. N-linked (GlcNAc...) asparagine glycosylation is present at N463.

Belongs to the peptidase A1 family. Highly expressed in pollen and pollen tubes. Mostly expressed in roots, flowers and inflorescence, and at lower levels in stems, seedlings and siliques.

Its subcellular location is the cell membrane. The protein localises to the cytoplasm. It localises to the cytosol. In terms of biological role, displays aspartic proteolytic activity. Together with A39, contributes to pollen and ovule development, including the apical cell wall constitution of the growing pollen tubes. The sequence is that of Aspartic proteinase 36 from Arabidopsis thaliana (Mouse-ear cress).